The following is a 421-amino-acid chain: Phosphatidate cytidylyltransferase 1 (421 aa).

Met1 carries the N-acetylmethionine modification. Over residues Met1 to Thr12 the composition is skewed to polar residues. The interval Met1 to Val26 is disordered. Transmembrane regions (helical) follow at residues Ile60–Val80, Leu102–Gly122, Tyr149–Leu169, Trp183–Phe203, Ile206–Phe226, Gly246–Gly266, Leu321–Phe341, and Val369–Val389.

Belongs to the CDS family. Mg(2+) is required as a cofactor.

The protein resides in the membrane. The catalysed reaction is a 1,2-diacyl-sn-glycero-3-phosphate + CTP + H(+) = a CDP-1,2-diacyl-sn-glycerol + diphosphate. It participates in phospholipid metabolism; CDP-diacylglycerol biosynthesis; CDP-diacylglycerol from sn-glycerol 3-phosphate: step 3/3. Functionally, may be involved in the synthesis of minor phospholipids and in modulation of IP3-mediated signal transduction. This is Phosphatidate cytidylyltransferase 1 from Arabidopsis thaliana (Mouse-ear cress).